A 324-amino-acid polypeptide reads, in one-letter code: MIFSKISQVAHYVPQQLVTNNDLASIMDTSHEWIFSRTGIAERHISRDEMTSDLAIQVADQLLTQSGLKADAIDFIIVATISPDATMPSTAAKVQAAIAATSAFAFDMTAACSGFVFALAMADKLIASGAYQNGMVIGAETLSKLVNWQDRATAVLFGDGAGGVLLEASKDKHVLAETLHTDGARCQSLISGETSLSSPYSIGKKAIATIQMDGRAIFDFAIRDVSKSILTLMAQSDITKDDIDYCLLHQANRRILDKIARKIDVPREKFLENMMRYGNTSAASIPILLSEAVQKGQIRLDGTQKILLSGFGGGLTWGSLIVRI.

Active-site residues include cysteine 112 and histidine 249. Residues 250-254 (QANRR) form an ACP-binding region. Asparagine 279 is a catalytic residue.

Belongs to the thiolase-like superfamily. FabH family. Homodimer.

It is found in the cytoplasm. The enzyme catalyses malonyl-[ACP] + acetyl-CoA + H(+) = 3-oxobutanoyl-[ACP] + CO2 + CoA. It participates in lipid metabolism; fatty acid biosynthesis. In terms of biological role, catalyzes the condensation reaction of fatty acid synthesis by the addition to an acyl acceptor of two carbons from malonyl-ACP. Catalyzes the first condensation reaction which initiates fatty acid synthesis and may therefore play a role in governing the total rate of fatty acid production. Possesses both acetoacetyl-ACP synthase and acetyl transacylase activities. Its substrate specificity determines the biosynthesis of branched-chain and/or straight-chain of fatty acids. This chain is Beta-ketoacyl-[acyl-carrier-protein] synthase III, found in Streptococcus pyogenes serotype M1.